The sequence spans 445 residues: Tubulin beta chain (445 aa).

Gln-11, Glu-69, Ser-138, Gly-142, Thr-143, Gly-144, Asn-204, and Asn-226 together coordinate GTP. Glu-69 contributes to the Mg(2+) binding site. Residues Gln-426–Ala-445 are disordered. Residues Thr-429–Ala-445 are compositionally biased toward acidic residues.

It belongs to the tubulin family. As to quaternary structure, dimer of alpha and beta chains. A typical microtubule is a hollow water-filled tube with an outer diameter of 25 nm and an inner diameter of 15 nM. Alpha-beta heterodimers associate head-to-tail to form protofilaments running lengthwise along the microtubule wall with the beta-tubulin subunit facing the microtubule plus end conferring a structural polarity. Microtubules usually have 13 protofilaments but different protofilament numbers can be found in some organisms and specialized cells. Interacts with DCX/apicortin; the interaction stabilizes microtubule assembly. It depends on Mg(2+) as a cofactor.

Its subcellular location is the cytoplasm. It localises to the cytoskeleton. In terms of biological role, tubulin is the major constituent of microtubules, a cylinder consisting of laterally associated linear protofilaments composed of alpha- and beta-tubulin heterodimers. Microtubules grow by the addition of GTP-tubulin dimers to the microtubule end, where a stabilizing cap forms. Below the cap, tubulin dimers are in GDP-bound state, owing to GTPase activity of alpha-tubulin. This Plasmodium falciparum (isolate 3D7) protein is Tubulin beta chain.